The sequence spans 565 residues: Periplasmic trehalase (565 aa).

An N-terminal signal peptide occupies residues 1 to 30; that stretch reads MKSPAPSRPQKMALIPACIFLCFAALSVQA. Substrate contacts are provided by residues Arg-152, 159–160, Asn-196, 205–207, 277–279, and Gly-310; these read WD, RSQ, and RPE. Catalysis depends on proton donor/acceptor residues Asp-312 and Glu-496. Glu-511 contacts substrate. A disordered region spans residues 539 to 565; sequence CDNVPATRPLSESTTQPVKPKEAEPTL.

The protein belongs to the glycosyl hydrolase 37 family. As to quaternary structure, monomer.

Its subcellular location is the periplasm. It carries out the reaction alpha,alpha-trehalose + H2O = alpha-D-glucose + beta-D-glucose. In terms of biological role, provides the cells with the ability to utilize trehalose at high osmolarity by splitting it into glucose molecules that can subsequently be taken up by the phosphotransferase-mediated uptake system. This chain is Periplasmic trehalase, found in Shigella dysenteriae serotype 1 (strain Sd197).